The primary structure comprises 916 residues: Bifunctional aspartokinase/homoserine dehydrogenase 2, chloroplastic (916 aa).

The transit peptide at methionine 1–glutamate 87 directs the protein to the chloroplast. The tract at residues methionine 88 to leucine 336 is aspartokinase. The interval serine 337–isoleucine 562 is interface. ACT domains are found at residues valine 412–asparagine 487 and alanine 493–alanine 570. A homoserine dehydrogenase region spans residues valine 563–serine 916. Isoleucine 568 is an NAD(+) binding site. NADP(+) is bound by residues isoleucine 568, lysine 600, threonine 649, and lysine 673. Isoleucine 568 contributes to the NADPH binding site. Residue threonine 649 participates in NAD(+) binding. Threonine 649 and lysine 673 together coordinate NADPH. Residues glutamate 700, valine 703, alanine 705, and leucine 707 each contribute to the Na(+) site. NADP(+)-binding residues include glycine 758 and glutamate 761. The L-homoserine site is built by glutamate 761 and aspartate 772. Lysine 776 serves as the catalytic Proton donor. Position 893 (glycine 893) interacts with NAD(+). Glycine 893 provides a ligand contact to NADP(+). An NADPH-binding site is contributed by glycine 893.

It in the N-terminal section; belongs to the aspartokinase family. This sequence in the C-terminal section; belongs to the homoserine dehydrogenase family. In terms of assembly, homo- or heterodimer. A metal cation is required as a cofactor.

Its subcellular location is the plastid. The protein resides in the chloroplast. It carries out the reaction L-homoserine + NADP(+) = L-aspartate 4-semialdehyde + NADPH + H(+). The catalysed reaction is L-homoserine + NAD(+) = L-aspartate 4-semialdehyde + NADH + H(+). It catalyses the reaction L-aspartate + ATP = 4-phospho-L-aspartate + ADP. It participates in amino-acid biosynthesis; L-lysine biosynthesis via DAP pathway; (S)-tetrahydrodipicolinate from L-aspartate: step 1/4. The protein operates within amino-acid biosynthesis; L-methionine biosynthesis via de novo pathway; L-homoserine from L-aspartate: step 1/3. It functions in the pathway amino-acid biosynthesis; L-methionine biosynthesis via de novo pathway; L-homoserine from L-aspartate: step 3/3. Its pathway is amino-acid biosynthesis; L-threonine biosynthesis; L-threonine from L-aspartate: step 1/5. It participates in amino-acid biosynthesis; L-threonine biosynthesis; L-threonine from L-aspartate: step 3/5. With respect to regulation, threonine interaction with Gln-443 leads to inhibition of aspartate kinase activity and facilitates the binding of a second threonine on Gln-524, leading to a partial inhibition of homoserine dehydrogenase activity (25% of activity remaining at saturation with threonine). Homoserine dehydrogenase activity is also partially inhibited by cysteine (15% of activity remaining at saturation with cysteine). No synergy between threonine and cysteine for the inhibition. 13-fold activation of aspartate kinase activity by cysteine, isoleucine, valine, serine and alanine at 2.5 mM and 4-fold activation by leucine at 2.5 mM, but no activation of homoserine dehydrogenase activity. In terms of biological role, bifunctional aspartate kinase and homoserine dehydrogenase that catalyzes the first and the third steps toward the synthesis of lysine, methionine and threonine from aspartate. This chain is Bifunctional aspartokinase/homoserine dehydrogenase 2, chloroplastic (AKHSDH2), found in Arabidopsis thaliana (Mouse-ear cress).